Consider the following 358-residue polypeptide: Myb family transcription factor APL (358 aa).

In terms of domain architecture, HTH myb-type spans 31–91 (TDPKPRLRWT…HLQKFRLGKQ (61 aa)). The segment at residues 62–87 (PKTIMRVMGVKGLTLYHLKSHLQKFR) is a DNA-binding region (H-T-H motif). Residues 125-145 (RNMNEMQMEVQRRLHEQLEVQ) are a coiled coil. The LHEQLE signature appears at 138-143 (LHEQLE). A disordered region spans residues 313-358 (RKSGLSGDEGNNGGKLLERPSPRRSPLSPMMNPNGGLIQGRNSPFG).

This sequence belongs to the MYB-CC family. Expressed in shoots and roots, specifically in the developing protophloem sieve elements. Detected in phloem and/or cambium. Expressed in the phloem tissues of various organs, including leaves and cotyledons, during vegetative growth.

It localises to the nucleus. Transcription factor required for phloem identity. Has a dual role both in promoting phloem differentiation and in repressing xylem differentiation during vascular development. Regulates the expression of the transcription factor NAC045 (AC A4VCM0). May activate the transcription of specific genes involved in phosphate uptake or assimilation. Promotes flowering through transcriptional activation of both FT and its transport machinery component, FTIP1. The chain is Myb family transcription factor APL from Arabidopsis thaliana (Mouse-ear cress).